The chain runs to 877 residues: Phosphoenolpyruvate carboxylase (877 aa).

Active-site residues include histidine 138 and lysine 543.

Belongs to the PEPCase type 1 family. The cofactor is Mg(2+).

The enzyme catalyses oxaloacetate + phosphate = phosphoenolpyruvate + hydrogencarbonate. Functionally, forms oxaloacetate, a four-carbon dicarboxylic acid source for the tricarboxylic acid cycle. The protein is Phosphoenolpyruvate carboxylase of Aeromonas salmonicida (strain A449).